A 207-amino-acid chain; its full sequence is Large ribosomal subunit protein uL3c (207 aa).

Positions 115–151 are disordered; sequence IGKGFAGNQKRHNFSRGPMTHGSKNHRLPGSIGAGST.

Belongs to the universal ribosomal protein uL3 family. In terms of assembly, part of the 50S ribosomal subunit.

Its subcellular location is the plastid. The protein resides in the chloroplast. Functionally, one of the primary rRNA binding proteins, it binds directly near the 3'-end of the 23S rRNA, where it nucleates assembly of the 50S subunit. This chain is Large ribosomal subunit protein uL3c (rpl3), found in Emiliania huxleyi (Coccolithophore).